Here is an 802-residue protein sequence, read N- to C-terminus: DEAD-box ATP-dependent RNA helicase 28 (802 aa).

Positions 1–179 are disordered; the sequence is MDADFRFDPD…TDKKSGVVDP (179 aa). Acidic residues-rich tracts occupy residues 76–131 and 138–169; these read GDSE…EELE and KSDE…EEEE. 2 coiled-coil regions span residues 90–122 and 149–174; these read DSEE…GVEV and QDGE…DKKS. Residues 194-222 carry the Q motif motif; that stretch reads NSFLELNLSRPLLRACEALGYQKPTPIQA. The region spanning 225–399 is the Helicase ATP-binding domain; that stretch reads IPLALTGRDI…TLSLNKPVRL (175 aa). 238-245 serves as a coordination point for ATP; sequence AITGSGKT. The DEAD box motif lies at 347–350; that stretch reads DEAD. In terms of domain architecture, Helicase C-terminal spans 429-573; the sequence is VLLALCLKTF…SRIVAEKPVA (145 aa). Positions 572–616 form a coiled coil; sequence VAECAKLIEELEDQISTIIQEEREERILRKAEMEATKAENMIAHK. The tract at residues 639–802 is disordered; sequence KAAKESTSQG…KSKSRYNRRK (164 aa). Residues 644–659 show a composition bias toward polar residues; that stretch reads STSQGKSNSGVISAQQ. Positions 666–684 are enriched in basic residues; it reads KEKKRREREKNLPRKKRRR. A coiled-coil region spans residues 671 to 712; the sequence is REREKNLPRKKRRRLEAEREMLEDESEDEEEAKESKGGKKEK. Over residues 691–702 the composition is skewed to acidic residues; it reads MLEDESEDEEEA. Residues 776–802 are compositionally biased toward basic residues; that stretch reads RSLKKNNVMRKKSKNSFKSKSRYNRRK.

The protein belongs to the DEAD box helicase family. DDX27/DRS1 subfamily.

It carries out the reaction ATP + H2O = ADP + phosphate + H(+). The chain is DEAD-box ATP-dependent RNA helicase 28 from Oryza sativa subsp. japonica (Rice).